We begin with the raw amino-acid sequence, 393 residues long: Ethanol acetyltransferase 1 (393 aa).

The N-terminal 25 residues, 1–25, are a transit peptide targeting the mitochondrion; that stretch reads MHFTRTLFNQVASKASRQLPVQKRV. The AB hydrolase-1 domain occupies 49 to 151; that stretch reads PIVFVHGIFG…GVIIDNSPIE (103 aa). Residues serine 122, aspartate 146, and histidine 296 each act as charge relay system in the active site. Over residues 343–354 the composition is skewed to basic and acidic residues; sequence AKHAQQIEELRK. Positions 343–393 are disordered; sequence AKHAQQIEELRKVTSTSESSIPHSTQSSEQAFTENIDLARQEREHQKSVSA. Residues 355 to 375 are compositionally biased toward polar residues; sequence VTSTSESSIPHSTQSSEQAFT. Residues 379–393 show a composition bias toward basic and acidic residues; sequence DLARQEREHQKSVSA.

The protein belongs to the AB hydrolase superfamily.

It localises to the mitochondrion. It catalyses the reaction ethanol + acetyl-CoA = ethyl acetate + CoA. The catalysed reaction is acetyl-CoA + H2O = acetate + CoA + H(+). It carries out the reaction ethyl acetate + H2O = ethanol + acetate + H(+). Functionally, alcohol acetyltransferase that catalyzes the synthesis of ethyl acetate from ethanol and acetyl-CoA. Can also function as a thioesterase by hydrolyzing acetyl-CoA in the absence of ethanol, as well as esterase hydrolyzing ethyl acetate. The polypeptide is Ethanol acetyltransferase 1 (EAT1) (Wickerhamomyces ciferrii (strain ATCC 14091 / BCRC 22168 / CBS 111 / JCM 3599 / NBRC 0793 / NRRL Y-1031 F-60-10) (Yeast)).